We begin with the raw amino-acid sequence, 569 residues long: Proline--tRNA ligase (569 aa).

It belongs to the class-II aminoacyl-tRNA synthetase family. ProS type 1 subfamily. Homodimer.

It localises to the cytoplasm. It catalyses the reaction tRNA(Pro) + L-proline + ATP = L-prolyl-tRNA(Pro) + AMP + diphosphate. Functionally, catalyzes the attachment of proline to tRNA(Pro) in a two-step reaction: proline is first activated by ATP to form Pro-AMP and then transferred to the acceptor end of tRNA(Pro). As ProRS can inadvertently accommodate and process non-cognate amino acids such as alanine and cysteine, to avoid such errors it has two additional distinct editing activities against alanine. One activity is designated as 'pretransfer' editing and involves the tRNA(Pro)-independent hydrolysis of activated Ala-AMP. The other activity is designated 'posttransfer' editing and involves deacylation of mischarged Ala-tRNA(Pro). The misacylated Cys-tRNA(Pro) is not edited by ProRS. The polypeptide is Proline--tRNA ligase (Campylobacter jejuni subsp. jejuni serotype O:2 (strain ATCC 700819 / NCTC 11168)).